We begin with the raw amino-acid sequence, 993 residues long: Vacuolar membrane protease (993 aa).

Residues 1 to 24 lie on the Cytoplasmic side of the membrane; it reads MSPAMANPRVRKFNPIAFTPLPVT. Residues 25-45 traverse the membrane as a helical segment; that stretch reads LITTIVYLAVLILVLVTYLVV. The Vacuolar portion of the chain corresponds to 46-391; that stretch reads PPAPTLEMSP…SAFAVFRLHT (346 aa). Residues Asn-59, Asn-116, and Asn-119 are each glycosylated (N-linked (GlcNAc...) asparagine). Residues His-175 and Asp-187 each contribute to the Zn(2+) site. Residue Glu-221 is the Proton acceptor of the active site. Glu-222 is a binding site for Zn(2+). Asn-238 carries an N-linked (GlcNAc...) asparagine glycan. Zn(2+)-binding residues include Glu-247 and His-320. The helical transmembrane segment at 392 to 412 threads the bilayer; sequence LFALSVTLLVSAPLVLFITSI. Residues 413-447 lie on the Cytoplasmic side of the membrane; the sequence is ALSKTDRMYLFSMSKSLGGTSETVSLRGLRGLFRT. The chain crosses the membrane as a helical span at residues 448 to 468; the sequence is PIILTVTTVITIGLAYLLEKI. The Vacuolar segment spans residues 469–475; the sequence is NPYIVHS. A helical membrane pass occupies residues 476–496; it reads SQFAVWSMMLSVWIFVAWFLA. The Cytoplasmic segment spans residues 497 to 509; that stretch reads RVADFFRPSALHR. Residues 510–530 form a helical membrane-spanning segment; sequence AYSYTWIFIATWIMLVISTVY. Over 531-534 the chain is Vacuolar; that stretch reads ANQK. The chain crosses the membrane as a helical span at residues 535-555; it reads GIAAGYFIFFYFAAVFLATWV. Residues 556 to 672 lie on the Cytoplasmic side of the membrane; it reads SYLELFSLPR…WSWTLPRWTW (117 aa). The tract at residues 579 to 621 is disordered; that stretch reads RRSSSLSSRLLTPSADELPSDIGPNGAENLGDPDETDPTESTS. Residues 673 to 693 traverse the membrane as a helical segment; sequence ILQLLLLAPIVIILVGQVGLL. Over 694–709 the chain is Vacuolar; it reads LTTAMSQIGSDGVSTF. A helical membrane pass occupies residues 710–730; that stretch reads IVYLACALLSTLLFAPLFPFI. The Cytoplasmic portion of the chain corresponds to 731–737; the sequence is HRFTYHV. Residues 738 to 758 form a helical membrane-spanning segment; it reads PTFLLLIFIGTLIYNLVAFPF. The Vacuolar segment spans residues 759 to 993; that stretch reads SPANRLKIFF…VEASHDFIIQ (235 aa). 3 N-linked (GlcNAc...) asparagine glycosylation sites follow: Asn-806, Asn-847, and Asn-955.

The protein belongs to the peptidase M28 family. Requires Zn(2+) as cofactor.

Its subcellular location is the vacuole membrane. May be involved in vacuolar sorting and osmoregulation. This is Vacuolar membrane protease from Paracoccidioides lutzii (strain ATCC MYA-826 / Pb01) (Paracoccidioides brasiliensis).